Reading from the N-terminus, the 1015-residue chain is DExH-box ATP-dependent RNA helicase DExH8 (1015 aa).

Residues 36–197 (IDKILENRVT…FKELGRGERV (162 aa)) form the Helicase ATP-binding domain. 49 to 56 (GEPGCGKS) provides a ligand contact to ATP. Residues 144–147 (DEVH) carry the DEVH box motif. Positions 254-419 (LIHDLILYIH…KLSLRQQVLH (166 aa)) constitute a Helicase C-terminal domain. C3H1-type zinc fingers lie at residues 727 to 753 (YGEA…THTL) and 754 to 782 (QSTR…HAMR).

It belongs to the DExH box helicase family.

The catalysed reaction is ATP + H2O = ADP + phosphate + H(+). The chain is DExH-box ATP-dependent RNA helicase DExH8 from Arabidopsis thaliana (Mouse-ear cress).